A 414-amino-acid polypeptide reads, in one-letter code: Histidinol dehydrogenase (414 aa).

Y116, Q177, and N200 together coordinate NAD(+). Residues T223, Q245, and H248 each contribute to the substrate site. Positions 245 and 248 each coordinate Zn(2+). Residues E313 and H314 each act as proton acceptor in the active site. 4 residues coordinate substrate: H314, D347, E401, and H406. D347 provides a ligand contact to Zn(2+). H406 lines the Zn(2+) pocket.

The protein belongs to the histidinol dehydrogenase family. It depends on Zn(2+) as a cofactor.

It carries out the reaction L-histidinol + 2 NAD(+) + H2O = L-histidine + 2 NADH + 3 H(+). It participates in amino-acid biosynthesis; L-histidine biosynthesis; L-histidine from 5-phospho-alpha-D-ribose 1-diphosphate: step 9/9. Its function is as follows. Catalyzes the sequential NAD-dependent oxidations of L-histidinol to L-histidinaldehyde and then to L-histidine. This chain is Histidinol dehydrogenase, found in Staphylococcus epidermidis (strain ATCC 35984 / DSM 28319 / BCRC 17069 / CCUG 31568 / BM 3577 / RP62A).